Here is a 227-residue protein sequence, read N- to C-terminus: Cytochrome c oxidase subunit 2 (227 aa).

At 1–14 the chain is on the mitochondrial intermembrane side; it reads MAYPFQLGLQDATS. The chain crosses the membrane as a helical span at residues 15–45; the sequence is PIMEELMNFHDHTLMIVFLISSLVLYIISLM. Residues 46–59 are Mitochondrial matrix-facing; the sequence is LTTKLTHTSTMDAQ. The helical transmembrane segment at 60–87 threads the bilayer; it reads EVETIWTILPAVILILIALPSLRILYMM. The Mitochondrial intermembrane segment spans residues 88–227; sequence DEINNPVLTV…NFENWSTSMI (140 aa). Cu cation-binding residues include histidine 161, cysteine 196, glutamate 198, cysteine 200, histidine 204, and methionine 207. Glutamate 198 lines the Mg(2+) pocket.

It belongs to the cytochrome c oxidase subunit 2 family. As to quaternary structure, component of the cytochrome c oxidase (complex IV, CIV), a multisubunit enzyme composed of 14 subunits. The complex is composed of a catalytic core of 3 subunits MT-CO1, MT-CO2 and MT-CO3, encoded in the mitochondrial DNA, and 11 supernumerary subunits COX4I, COX5A, COX5B, COX6A, COX6B, COX6C, COX7A, COX7B, COX7C, COX8 and NDUFA4, which are encoded in the nuclear genome. The complex exists as a monomer or a dimer and forms supercomplexes (SCs) in the inner mitochondrial membrane with NADH-ubiquinone oxidoreductase (complex I, CI) and ubiquinol-cytochrome c oxidoreductase (cytochrome b-c1 complex, complex III, CIII), resulting in different assemblies (supercomplex SCI(1)III(2)IV(1) and megacomplex MCI(2)III(2)IV(2)). Found in a complex with TMEM177, COA6, COX18, COX20, SCO1 and SCO2. Interacts with TMEM177 in a COX20-dependent manner. Interacts with COX20. Interacts with COX16. Cu cation is required as a cofactor.

The protein resides in the mitochondrion inner membrane. The catalysed reaction is 4 Fe(II)-[cytochrome c] + O2 + 8 H(+)(in) = 4 Fe(III)-[cytochrome c] + 2 H2O + 4 H(+)(out). In terms of biological role, component of the cytochrome c oxidase, the last enzyme in the mitochondrial electron transport chain which drives oxidative phosphorylation. The respiratory chain contains 3 multisubunit complexes succinate dehydrogenase (complex II, CII), ubiquinol-cytochrome c oxidoreductase (cytochrome b-c1 complex, complex III, CIII) and cytochrome c oxidase (complex IV, CIV), that cooperate to transfer electrons derived from NADH and succinate to molecular oxygen, creating an electrochemical gradient over the inner membrane that drives transmembrane transport and the ATP synthase. Cytochrome c oxidase is the component of the respiratory chain that catalyzes the reduction of oxygen to water. Electrons originating from reduced cytochrome c in the intermembrane space (IMS) are transferred via the dinuclear copper A center (CU(A)) of subunit 2 and heme A of subunit 1 to the active site in subunit 1, a binuclear center (BNC) formed by heme A3 and copper B (CU(B)). The BNC reduces molecular oxygen to 2 water molecules using 4 electrons from cytochrome c in the IMS and 4 protons from the mitochondrial matrix. The sequence is that of Cytochrome c oxidase subunit 2 (MT-CO2) from Apodemus mystacinus (Broad-toothed field mouse).